The primary structure comprises 507 residues: Cytochrome P450 monooxygenase helB3 (507 aa).

An N-terminal signal peptide occupies residues 1-25 (MAVATLISILFAVLALRLCYLLIHA). 3 N-linked (GlcNAc...) asparagine glycosylation sites follow: asparagine 111, asparagine 206, and asparagine 339. Heme is bound at residue cysteine 435.

It belongs to the cytochrome P450 family. Heme serves as cofactor.

Its pathway is mycotoxin biosynthesis. In terms of biological role, cytochrome P450 monooxygenase; part of the gene cluster that mediates the biosynthesis of helvolic acid, an antibacterial nortriterpenoid. Protostadienol synthase helA cyclizes (3S)-oxidosqualene to (17Z)-protosta-17(20),24-dien-3-beta-ol (protostadienol). The synthesis of protostadienol is followed by several steps of monooxygenation, dehydrogenation, and acyl transfer to yield the final helvolic acid. Following the cyclization to the tetracyclic protostadienol by helA, cytochrome P450 monooxygenases helB1-mediated and helB2-mediated oxidation at C-4 and C-16, acyltransferase helD2-dependent acetylation of 16-OH, oxidation of C-21 by cytochrome P450 monooxygenase helB4, and short chain dehydrogenase helC-dependent oxidative decarboxylation yield the fusidane skeleton. This intermediate is further modified in three additional steps mediated by the cytochrome P450 monooxygenase helB3, the acyltransferase helD1, and the 3-ketosteroid 1-dehydrogenase helE to give helvolic acid. Compared with the late stages in the biosynthesis of helvolic acid, enzymes involved in the early stage modifications act in a relatively strict order. The hydroxylation of C-16 by helB1 and subsequent acetylation by helD2 should occur before the helB3-mediated oxidation of C-21. C-4 demethylation in fusidane-type antibiotics proceeds in an unusual manner though it is also achieved by oxidative decarboxylation. The methyl group at C-4 beta position is oxidized by helB1 and subsequently removed by the short chain dehydrogenase helC. The polypeptide is Cytochrome P450 monooxygenase helB3 (Aspergillus fumigatus (strain ATCC MYA-4609 / CBS 101355 / FGSC A1100 / Af293) (Neosartorya fumigata)).